The sequence spans 305 residues: Endonuclease 1 (305 aa).

The signal sequence occupies residues 1 to 28 (MASAFRSSTRLILVLGILILCSVSSVRS). A divalent metal cation is bound by residues W29 and H34. 29-34 (WSKEGH) is a substrate binding site. C38 and C69 are oxidised to a cystine. Residues D73 and H88 each coordinate a divalent metal cation. Residues 73–79 (DQIRHWY), 88–91 (HYID), and 98–103 (SYEYSR) each bind substrate. Intrachain disulfides connect C97–C249, C105–C115, and C230–C236. Substrate is bound by residues N122 and Y139. N122 is a glycosylation site (N-linked (GlcNAc...) asparagine). An N-linked (GlcNAc...) asparagine glycan is attached at N140. Positions 150, 154, 160, 184, and 188 each coordinate a divalent metal cation. The substrate binding stretch occupies residues 150–199 (HFMGDIHQPMHVGFTSDEGGNTIDLRWYKHKSNLHHVWDREIILTALKEN). N-linked (GlcNAc...) asparagine glycosylation occurs at N214. A propeptide spans 287-305 (MILNRVFSDDHAIAGVAAT) (removed in mature form).

It belongs to the nuclease type I family. Monomer. Requires Mn(2+) as cofactor. Ca(2+) serves as cofactor. As to expression, mostly expressed in flowers and during leaf and stem senescence, and, to a lower extent, detectable at low levels in roots, leaves, and stems. Particularly expressed in senescing tissues in a NAC92/ORE1-dependent manner.

The catalysed reaction is Endonucleolytic cleavage to 5'-phosphomononucleotide and 5'-phosphooligonucleotide end-products.. Functionally, endonuclease that can use RNA, single-stranded and double-stranded DNA as substrates. Hydrolyzes single-stranded DNA and RNA without apparent specificity for bases during senescence. Endonuclease that recognizes and cleaves all types of mismatches with high efficiency, including heteroduplex double-stranded DNA. Maybe involved in programmed cell death (PCD) and senescence. The protein is Endonuclease 1 of Arabidopsis thaliana (Mouse-ear cress).